The following is a 186-amino-acid chain: MQLVVARIGRAHGIKGEVTVEVRTDEPELRLGPGAVLATDPASVGPLTIETGRVHSGRLLLRFEGVRDRNGAEALRNTLLIAEVDPDEVPEDPDEYYDHQLMDLDVVTKDGTEVGRITEISHLPSQDLFVVERSDGSEVYIPFVEEIVVEIDLEEQRAVIDPPPGLIDDRAEVDSSDTEAATEADA.

The 74-residue stretch at 93-166 folds into the PRC barrel domain; sequence PDEYYDHQLM…RAVIDPPPGL (74 aa). Positions 160–186 are disordered; that stretch reads IDPPPGLIDDRAEVDSSDTEAATEADA. Over residues 174–186 the composition is skewed to acidic residues; sequence DSSDTEAATEADA.

Belongs to the RimM family. Binds ribosomal protein uS19.

Its subcellular location is the cytoplasm. Its function is as follows. An accessory protein needed during the final step in the assembly of 30S ribosomal subunit, possibly for assembly of the head region. Essential for efficient processing of 16S rRNA. May be needed both before and after RbfA during the maturation of 16S rRNA. It has affinity for free ribosomal 30S subunits but not for 70S ribosomes. This chain is Ribosome maturation factor RimM, found in Streptomyces avermitilis (strain ATCC 31267 / DSM 46492 / JCM 5070 / NBRC 14893 / NCIMB 12804 / NRRL 8165 / MA-4680).